A 557-amino-acid polypeptide reads, in one-letter code: Warthog protein 4 (557 aa).

Positions 1–20 are cleaved as a signal peptide; the sequence is MRFSLLALVLLSSSYKFTYG. Residues 272–308 are disordered; the sequence is QETNPQPPPPPGQQGGFVQPQGFQPQGGFQPQGFQPQ. Positions 287 to 308 are enriched in low complexity; that stretch reads GFVQPQGFQPQGGFQPQGFQPQ.

Belongs to the hedgehog family. Post-translationally, the C-terminal domain displays an autoproteolysis activity.

Its subcellular location is the secreted. It localises to the cell surface. It is found in the cell membrane. The protein localises to the extracellular space. Functionally, intercellular signal essential for a variety of patterning events during development. In Caenorhabditis elegans, this protein is Warthog protein 4 (wrt-4).